The chain runs to 254 residues: 23S rRNA (guanosine-2'-O-)-methyltransferase RlmB (254 aa).

Residues G198, I218, and L227 each coordinate S-adenosyl-L-methionine.

It belongs to the class IV-like SAM-binding methyltransferase superfamily. RNA methyltransferase TrmH family. RlmB subfamily. In terms of assembly, homodimer.

It is found in the cytoplasm. It carries out the reaction guanosine(2251) in 23S rRNA + S-adenosyl-L-methionine = 2'-O-methylguanosine(2251) in 23S rRNA + S-adenosyl-L-homocysteine + H(+). Functionally, specifically methylates the ribose of guanosine 2251 in 23S rRNA. This is 23S rRNA (guanosine-2'-O-)-methyltransferase RlmB from Blochmanniella floridana.